Here is a 1190-residue protein sequence, read N- to C-terminus: Pumilio homolog 1 (1190 aa).

Disordered stretches follow at residues 38 to 74, 491 to 531, 611 to 675, and 744 to 777; these read LTSG…GVAG, SNSA…QQTD, ANGP…NSSL, and GPVG…LNLG. Low complexity-rich tracts occupy residues 491 to 508, 518 to 531, 628 to 675, and 765 to 777; these read SNSA…GQQQ, PLTP…QQTD, QQPQ…NSSL, and LSSH…LNLG. Residues 830 to 1172 form the PUM-HD domain; the sequence is GRSRLLEDFR…HILAKLEKYY (343 aa). Pumilio repeat units lie at residues 850–885, 886–921, 922–959, 960–995, 996–1031, 1032–1067, 1068–1103, and 1107–1146; these read EIAG…LVFN, EILQ…ALAE, RIRG…EMVR, ELDG…FIID, AFKS…PILE, ELHQ…KIVA, EIRG…MLID, and TMND…IVMH. The segment at 865-869 is adenine-nucleotide binding in RNA target; it reads SRFIQ. The tract at residues 901 to 905 is uracil-nucleotide binding in RNA target; the sequence is NYVIQ. The tract at residues 937–941 is adenine-nucleotide binding in RNA target; that stretch reads CRVIQ. The non-specific-nucleotide binding in RNA target stretch occupies residues 975–979; that stretch reads NHVVQ. The adenine-nucleotide binding in RNA target stretch occupies residues 1011–1015; that stretch reads CRVIQ. Positions 1047–1051 are uracil-nucleotide binding in RNA target; sequence NYVIQ. The segment at 1083-1087 is guanine-nucleotide binding in RNA target; that stretch reads SNVVE. The tract at residues 1126–1130 is uracil-nucleotide binding in RNA target; it reads NYVVQ.

Interacts with cpeb1-a; interacts with unphosphorylated cpeb1-a but not phosphorylated. Component of a complex with papd4, sympk, tacc3, parn, dazl and cpeb1. Phosphorylated. Phosphorylation takes place at the time of dissociation of cpeb1-a from pum1 and the translational activation of ccnb1 mRNA. As to expression, present in oocytes (at protein level).

It localises to the cytoplasm. The protein resides in the P-body. The protein localises to the cytoplasmic granule. Functionally, sequence-specific RNA-binding protein that acts as a post-transcriptional repressor by binding the 3'-UTR of mRNA targets. Binds to an RNA consensus sequence, the Pumilio Response Element (PRE), 5'-UGUANAUA-3', that is related to the Nanos Response Element (NRE). Mediates post-transcriptional repression of transcripts via different mechanisms: acts via direct recruitment of deadenylase complexes leading to translational inhibition and mRNA degradation. Also mediates deadenylation-independent repression by promoting accessibility of miRNAs. Acts as a post-transcriptional repressor of ccnb1 mRNA during oocyte maturation. In Xenopus laevis (African clawed frog), this protein is Pumilio homolog 1.